A 108-amino-acid polypeptide reads, in one-letter code: uncharacterized protein (108 aa).

Polar residues predominate over residues 1–12 (MSNQQKQLQLPS). A disordered region spans residues 1 to 22 (MSNQQKQLQLPSASIKKPKEKQ).

This is an uncharacterized protein from Dictyostelium discoideum (Social amoeba).